We begin with the raw amino-acid sequence, 381 residues long: Creatine kinase M-type (381 aa).

The Phosphagen kinase N-terminal domain occupies 11-98 (KLNYSAAEEF…FDPVIEDRHG (88 aa)). Residues 125-367 (YVLSSRVRTG…KLMVEMEKRL (243 aa)) form the Phosphagen kinase C-terminal domain. Residues 128-132 (SSRVR), His-191, Arg-236, Arg-292, 320-325 (RGTGGV), and Asp-335 each bind ATP.

Belongs to the ATP:guanido phosphotransferase family. Dimer of identical or non-identical chains. With MM being the major form in skeletal muscle and myocardium, MB existing in myocardium, and BB existing in many tissues, especially brain.

Its subcellular location is the cytoplasm. It catalyses the reaction creatine + ATP = N-phosphocreatine + ADP + H(+). Its function is as follows. Reversibly catalyzes the transfer of phosphate between ATP and various phosphogens (e.g. creatine phosphate). Creatine kinase isoenzymes play a central role in energy transduction in tissues with large, fluctuating energy demands, such as skeletal muscle, heart, brain and spermatozoa. The polypeptide is Creatine kinase M-type (Tetronarce californica (Pacific electric ray)).